A 114-amino-acid polypeptide reads, in one-letter code: Small ribosomal subunit protein uS14m (114 aa).

Belongs to the universal ribosomal protein uS14 family.

Its subcellular location is the mitochondrion. The sequence is that of Small ribosomal subunit protein uS14m (MRP2) from Eremothecium gossypii (strain ATCC 10895 / CBS 109.51 / FGSC 9923 / NRRL Y-1056) (Yeast).